We begin with the raw amino-acid sequence, 320 residues long: Protein PR73 (320 aa).

Residues 1 to 44 (MPRLQQKWLNSRECPTLRGEAAKGLFPTKDDPSAHKRMSPSDKD) lie on the Cytoplasmic side of the membrane. Residues 45 to 65 (ILILCCKLGIALLCLGLLGEV) traverse the membrane as a helical segment. Topologically, residues 66 to 320 (AVRARRALTL…AKTYGMSYYD (255 aa)) are extracellular. 6 N-linked (GlcNAc...) asparagine; by host glycosylation sites follow: Asn-80, Asn-81, Asn-90, Asn-94, Asn-132, and Asn-147.

The protein belongs to the mouse mammary tumor virus PR73 superantigen family.

Its subcellular location is the membrane. Functionally, superantigen. The chain is Protein PR73 from Mus musculus (Mouse).